The following is a 191-amino-acid chain: Recombination protein RecR (191 aa).

The segment at 51 to 66 (CQTCFHLSADPECEIC) adopts a C4-type zinc-finger fold. One can recognise a Toprim domain in the interval 74-168 (GVICVVADSR…SVSRIAYGLP (95 aa)).

Belongs to the RecR family.

Its function is as follows. May play a role in DNA repair. It seems to be involved in an RecBC-independent recombinational process of DNA repair. It may act with RecF and RecO. The protein is Recombination protein RecR of Synechococcus sp. (strain CC9605).